The following is a 273-amino-acid chain: ComE operon protein 4 (273 aa).

It belongs to the pyrroline-5-carboxylate reductase family.

In terms of biological role, dispensable for transformability. Not known if it can act as a pyrroline-5-carboxylate reductase. The polypeptide is ComE operon protein 4 (comER) (Bacillus subtilis (strain 168)).